A 1392-amino-acid polypeptide reads, in one-letter code: DNA-directed RNA polymerase subunit beta'' (1392 aa).

Zn(2+) contacts are provided by C224, C295, C302, and C305.

The protein belongs to the RNA polymerase beta' chain family. RpoC2 subfamily. In terms of assembly, in plastids the minimal PEP RNA polymerase catalytic core is composed of four subunits: alpha, beta, beta', and beta''. When a (nuclear-encoded) sigma factor is associated with the core the holoenzyme is formed, which can initiate transcription. Zn(2+) is required as a cofactor.

The protein localises to the plastid. It localises to the chloroplast. The enzyme catalyses RNA(n) + a ribonucleoside 5'-triphosphate = RNA(n+1) + diphosphate. Functionally, DNA-dependent RNA polymerase catalyzes the transcription of DNA into RNA using the four ribonucleoside triphosphates as substrates. This Solanum tuberosum (Potato) protein is DNA-directed RNA polymerase subunit beta''.